Reading from the N-terminus, the 84-residue chain is MTPLGLVWSTTLRCAPLDACTRATAAGPKNPATTEAPTTIVTFPKLFINTVTALPSFFPNTESVAFDSSVSLISLPALSGFSVK.

This is ICP35 from Crustacea (WSSV).